The primary structure comprises 63 residues: Conotoxin LeDr243 (63 aa).

The first 22 residues, 1–22, serve as a signal peptide directing secretion; that stretch reads MRCLPVFVILLLLIASTPSIDA. A propeptide spanning residues 23-47 is cleaved from the precursor; sequence RPKTKDDMPLASFNDNAKRILQILS. C60 is modified (cysteine amide). A propeptide spanning residues 62-63 is cleaved from the precursor; it reads LG.

Belongs to the conotoxin T superfamily. In terms of processing, contains 2 disulfide bonds that can be either 'C1-C3, C2-C4' or 'C1-C4, C2-C3', since these disulfide connectivities have been observed for conotoxins with cysteine framework V (for examples, see AC P0DQQ7 and AC P81755). Expressed by the venom duct.

The protein resides in the secreted. The polypeptide is Conotoxin LeDr243 (Conus litteratus (Lettered cone)).